The following is a 1114-amino-acid chain: OTU domain-containing protein 4 (1114 aa).

The residue at position 1 (Met1) is an N-acetylmethionine. Positions 1-22 (MEAAVGVPDGGDQGGAGPREDA) are disordered. Residues 8–17 (PDGGDQGGAG) are compositionally biased toward gly residues. The region spanning 34-155 (LYRKLVAKDG…GNHYDIVYPI (122 aa)) is the OTU domain. The cys-loop stretch occupies residues 39 to 45 (VAKDGSC). The active site involves Asp42. The active-site Nucleophile is the Cys45. A variable-loop region spans residues 94-104 (LENPQEWVGQV). Tyr120 carries the phosphotyrosine modification. A phosphoserine mark is found at Ser126 and Ser128. Phosphothreonine is present on Thr131. Positions 143-148 (FSNGNH) are his-loop. His148 is a catalytic residue. Residues Ser166, Ser199, Ser202, Ser204, and Ser341 each carry the phosphoserine modification. A disordered region spans residues 323-449 (KHTSKNLKAP…FGLSPEERRE (127 aa)). The span at 392–404 (FSSHSSGSQSQKF) shows a compositional bias: low complexity. A compositionally biased stretch (basic and acidic residues) spans 420 to 435 (RKPDRERVEDFDHTSR). Phosphotyrosine is present on Tyr439. Residue Ser443 is modified to Phosphoserine. The residue at position 460 (Tyr460) is a Phosphotyrosine. The disordered stretch occupies residues 472 to 567 (ALSSSSVNQS…PAEQKPAEHV (96 aa)). Positions 474 to 487 (SSSSVNQSASQSSN) are enriched in low complexity. The span at 496-529 (HVGDRKGSRRRMDTEERKDKDSIHGHSQLDKRPE) shows a compositional bias: basic and acidic residues. Residues Ser546, Ser893, and Ser900 each carry the phosphoserine modification. Positions 911–1114 (EFPEARGEHV…MGDGHRGQHT (204 aa)) are disordered. Composition is skewed to basic and acidic residues over residues 913-922 (PEARGEHVHS) and 969-1000 (NRERETVPVELEPKRTIQSLKEKTEKVKDPKT). 5 positions are modified to phosphoserine: Ser1006, Ser1011, Ser1014, Ser1023, and Ser1024. A compositionally biased stretch (polar residues) spans 1039 to 1048 (SKQFYNQTYG). Position 1049 is a phosphoserine (Ser1049). Composition is skewed to basic and acidic residues over residues 1067-1086 (VRSEESWKGQPSRSRDEGYQ) and 1096-1114 (FRGDRRRSGMGDGHRGQHT).

Interacts with MYD88; the interaction is direct. Interacts with ALKBH3; the interaction is direct. Interacts with USP7; the interaction is direct. Interacts with USP9X; the interaction is direct. Phosphorylated on Ser-202 and Ser-204 likely by CSNK2A1-CSNK2A2 serine/threonine-protein kinase complex. Activates 'Lys-63'-specific deubiquitinase activity.

It localises to the cytoplasm. It is found in the nucleus. It carries out the reaction Thiol-dependent hydrolysis of ester, thioester, amide, peptide and isopeptide bonds formed by the C-terminal Gly of ubiquitin (a 76-residue protein attached to proteins as an intracellular targeting signal).. Phosphorylation on Ser-202 and Ser-204 induces 'Lys-63'-specific deubiquitinase activity. In terms of biological role, deubiquitinase which hydrolyzes the isopeptide bond between the ubiquitin C-terminus and the lysine epsilon-amino group of the target protein. May negatively regulate inflammatory and pathogen recognition signaling in innate immune response. Upon phosphorylation at Ser-202 and Ser-204 residues, via IL-1 receptor and Toll-like receptor signaling pathway, specifically deubiquitinates 'Lys-63'-polyubiquitinated MYD88 adapter protein triggering down-regulation of NF-kappa-B-dependent transcription of inflammatory mediators. Independently of the catalytic activity, acts as a scaffold for alternative deubiquitinases to assemble specific deubiquitinase-substrate complexes. Associates with USP7 and USP9X deubiquitinases to stabilize alkylation repair enzyme ALKBH3, thereby promoting the repair of alkylated DNA lesions. The polypeptide is OTU domain-containing protein 4 (Homo sapiens (Human)).